We begin with the raw amino-acid sequence, 147 residues long: Large ribosomal subunit protein uL13 (147 aa).

It belongs to the universal ribosomal protein uL13 family. In terms of assembly, part of the 50S ribosomal subunit.

Its function is as follows. This protein is one of the early assembly proteins of the 50S ribosomal subunit, although it is not seen to bind rRNA by itself. It is important during the early stages of 50S assembly. This is Large ribosomal subunit protein uL13 from Mycobacteroides abscessus (strain ATCC 19977 / DSM 44196 / CCUG 20993 / CIP 104536 / JCM 13569 / NCTC 13031 / TMC 1543 / L948) (Mycobacterium abscessus).